The following is a 141-amino-acid chain: Large ribosomal subunit protein uL11 (141 aa).

Belongs to the universal ribosomal protein uL11 family. In terms of assembly, part of the ribosomal stalk of the 50S ribosomal subunit. Interacts with L10 and the large rRNA to form the base of the stalk. L10 forms an elongated spine to which L12 dimers bind in a sequential fashion forming a multimeric L10(L12)X complex. One or more lysine residues are methylated.

In terms of biological role, forms part of the ribosomal stalk which helps the ribosome interact with GTP-bound translation factors. This is Large ribosomal subunit protein uL11 from Carboxydothermus hydrogenoformans (strain ATCC BAA-161 / DSM 6008 / Z-2901).